The chain runs to 850 residues: Transforming growth factor beta receptor type 3 (850 aa).

Residues M1–A22 form the signal peptide. Over G23–T785 the chain is Extracellular. C54 and C199 are disulfide-bonded. N-linked (GlcNAc...) asparagine glycosylation is found at N143 and N491. Residues K454–C728 form the ZP domain. A disordered region spans residues S528 to E557. O-linked (Xyl...) (glycosaminoglycan) serine glycans are attached at residues S533 and S544. N570, N589, and N696 each carry an N-linked (GlcNAc...) asparagine glycan. Intrachain disulfides connect C638–C704, C659–C728, and C709–C721. The interaction with TGF-beta ligand stretch occupies residues M735–P749. The chain crosses the membrane as a helical span at residues V786–Y808. The Cytoplasmic segment spans residues S809–A850. Positions R817 to A833 are enriched in polar residues. The interval R817–A850 is disordered. The segment covering S835–A850 has biased composition (low complexity). T839 bears the Phosphothreonine mark.

As to quaternary structure, forms homodimers and homooligomers. Interacts with DYNLT4. Interacts with integrin ITGA5:ITGB1; this interaction promotes the internalization and trafficking of ITGA5:ITGB1 into endocytic vesicles. Interacts with TGFB1, BMP2, BMP5, BMP7 or GDF5 and inhibin A via the ligand binding domains. Interacts with ALK3/BMPR1A; this interaction results in the cell surface retention of BMPR1A. Interacts with ALK6/BMPR1B; this interaction enhances BMPR1B-mediated stimulation of the BMP signaling pathway. Interacts with the scaffolding protein beta-arrestin2/ARRB2; this interaction mediates internalization of TGFBR3 and thus regulates migration, actin cytoskeleton and activation of CDC42. Post-translationally, extensively modified by glycosaminoglycan groups (GAG). In terms of processing, phosphorylated in the cytoplasmic domain by the type II receptor TGFBR2 at THR-839 to mediate recruitment of ARRB2 and subsequent internalization of TGFBR2 and TGFBR3.

It localises to the cell membrane. It is found in the secreted. The protein localises to the extracellular space. Its subcellular location is the extracellular matrix. Functionally, cell surface receptor that regulates diverse cellular processes including cell proliferation, differentiation, migration, and apoptosis. Initiates BMP, inhibin, and TGF-beta signaling pathways by interacting with different ligands including TGFB1, BMP2, BMP5, BMP7 or GDF5. Alternatively, acts as a cell surface coreceptor for BMP ligands, serving to enhance ligand binding by differentially regulating BMPR1A/ALK3 and BMPR1B/ALK6 receptor trafficking. Promotes epithelial cell adhesion, focal adhesion formation and integrin signaling during epithelial cell spreading on fibronectin. By interacting with the scaffolding protein beta-arrestin2/ARRB2, regulates migration or actin cytoskeleton and promotes the activation of CDC42 as well as the inhibition of NF-kappa-B. In gonadotrope cells, acts as an inhibin A coreceptor and regulates follicle-stimulating hormone (FSH) levels and female fertility. Plays a role in the inhibition of directed and random cell migration in epithelial cells by altering the actin cytoskeletal organization. Participates in epithelial-mesenchymal transformation (EMT) upon binding to BMP2 or TGFB2, by activating the PAR6/SMURF1/RHOA pathway. In Mus musculus (Mouse), this protein is Transforming growth factor beta receptor type 3 (Tgfbr3).